We begin with the raw amino-acid sequence, 555 residues long: T-complex protein 1 subunit eta (555 aa).

The protein belongs to the TCP-1 chaperonin family. In terms of assembly, heterooligomeric complex of about 850 to 900 kDa that forms two stacked rings, 12 to 16 nm in diameter.

It is found in the cytoplasm. Functionally, molecular chaperone; assists the folding of proteins upon ATP hydrolysis. Known to play a role, in vitro, in the folding of actin and tubulin. The sequence is that of T-complex protein 1 subunit eta (cct7) from Dictyostelium discoideum (Social amoeba).